Here is a 227-residue protein sequence, read N- to C-terminus: Phosphoribosylformylglycinamidine synthase subunit PurQ (227 aa).

In terms of domain architecture, Glutamine amidotransferase type-1 spans 2-226; it reads KFAVIQFPGS…VKAWKEEQVN (225 aa). The active-site Nucleophile is the C86. Active-site residues include H195 and E197.

In terms of assembly, part of the FGAM synthase complex composed of 1 PurL, 1 PurQ and 2 PurS subunits.

The protein resides in the cytoplasm. It carries out the reaction N(2)-formyl-N(1)-(5-phospho-beta-D-ribosyl)glycinamide + L-glutamine + ATP + H2O = 2-formamido-N(1)-(5-O-phospho-beta-D-ribosyl)acetamidine + L-glutamate + ADP + phosphate + H(+). The catalysed reaction is L-glutamine + H2O = L-glutamate + NH4(+). The protein operates within purine metabolism; IMP biosynthesis via de novo pathway; 5-amino-1-(5-phospho-D-ribosyl)imidazole from N(2)-formyl-N(1)-(5-phospho-D-ribosyl)glycinamide: step 1/2. Its function is as follows. Part of the phosphoribosylformylglycinamidine synthase complex involved in the purines biosynthetic pathway. Catalyzes the ATP-dependent conversion of formylglycinamide ribonucleotide (FGAR) and glutamine to yield formylglycinamidine ribonucleotide (FGAM) and glutamate. The FGAM synthase complex is composed of three subunits. PurQ produces an ammonia molecule by converting glutamine to glutamate. PurL transfers the ammonia molecule to FGAR to form FGAM in an ATP-dependent manner. PurS interacts with PurQ and PurL and is thought to assist in the transfer of the ammonia molecule from PurQ to PurL. This chain is Phosphoribosylformylglycinamidine synthase subunit PurQ, found in Listeria monocytogenes serovar 1/2a (strain ATCC BAA-679 / EGD-e).